We begin with the raw amino-acid sequence, 244 residues long: N-(5'-phosphoribosyl)anthranilate isomerase 3, chloroplastic (244 aa).

The N-terminal 32 residues, 1–32, are a transit peptide targeting the chloroplast; that stretch reads MSTGISSDLHLHPRALNFSKTSKSGLSNRKVS.

Belongs to the TrpF family.

Its subcellular location is the plastid. It localises to the chloroplast. The catalysed reaction is N-(5-phospho-beta-D-ribosyl)anthranilate = 1-(2-carboxyphenylamino)-1-deoxy-D-ribulose 5-phosphate. It participates in amino-acid biosynthesis; L-tryptophan biosynthesis; L-tryptophan from chorismate: step 3/5. This Arabidopsis thaliana (Mouse-ear cress) protein is N-(5'-phosphoribosyl)anthranilate isomerase 3, chloroplastic (PAI3).